Here is a 122-residue protein sequence, read N- to C-terminus: UPF0102 protein CLL_A1253 (122 aa).

It belongs to the UPF0102 family.

The polypeptide is UPF0102 protein CLL_A1253 (Clostridium botulinum (strain Eklund 17B / Type B)).